A 336-amino-acid polypeptide reads, in one-letter code: Adenosine deaminase (336 aa).

Residues histidine 15 and histidine 17 each contribute to the Zn(2+) site. 3 residues coordinate substrate: histidine 17, aspartate 19, and glycine 172. Position 199 (histidine 199) interacts with Zn(2+). The active-site Proton donor is glutamate 202. Position 279 (aspartate 279) interacts with Zn(2+).

This sequence belongs to the metallo-dependent hydrolases superfamily. Adenosine and AMP deaminases family. Adenosine deaminase subfamily. Zn(2+) is required as a cofactor.

The catalysed reaction is adenosine + H2O + H(+) = inosine + NH4(+). It carries out the reaction 2'-deoxyadenosine + H2O + H(+) = 2'-deoxyinosine + NH4(+). Functionally, catalyzes the hydrolytic deamination of adenosine and 2-deoxyadenosine. This chain is Adenosine deaminase, found in Streptococcus thermophilus (strain ATCC BAA-250 / LMG 18311).